The chain runs to 335 residues: Cathepsin B (335 aa).

The signal sequence occupies residues 1-19; sequence MWQLLATLSCLLVLTSARS. Positions 20–79 are cleaved as a propeptide — activation peptide; the sequence is SLHFPPLSDEMVNYVNKQNTTWKAGHNFYNVDLSYVKKLCGAILGGPKLPQRDAFAADMV. Disulfide bonds link C93–C122, C105–C150, C141–C207, C142–C146, C179–C211, and C187–C198. C108 is an active-site residue. Residue N192 is glycosylated (N-linked (GlcNAc...) asparagine). An N6-acetyllysine modification is found at K220. Catalysis depends on residues H278 and N298. Residues 333-335 constitute a propeptide that is removed on maturation; sequence HQH.

Belongs to the peptidase C1 family. As to quaternary structure, dimer of a heavy chain and a light chain cross-linked by a disulfide bond. Interacts with SRPX2. Directly interacts with SHKBP1.

It localises to the lysosome. It is found in the melanosome. Its subcellular location is the secreted. The protein resides in the extracellular space. The protein localises to the apical cell membrane. The enzyme catalyses Hydrolysis of proteins with broad specificity for peptide bonds. Preferentially cleaves -Arg-Arg-|-Xaa bonds in small molecule substrates (thus differing from cathepsin L). In addition to being an endopeptidase, shows peptidyl-dipeptidase activity, liberating C-terminal dipeptides.. In terms of biological role, thiol protease which is believed to participate in intracellular degradation and turnover of proteins. Cleaves matrix extracellular phosphoglycoprotein MEPE. Involved in the solubilization of cross-linked TG/thyroglobulin in the thyroid follicle lumen. Has also been implicated in tumor invasion and metastasis. The protein is Cathepsin B (CTSB) of Ovis aries (Sheep).